The primary structure comprises 807 residues: Glycerol-3-phosphate acyltransferase (807 aa).

Positions 308 to 313 (CHRSHM) match the HXXXXD motif motif.

It belongs to the GPAT/DAPAT family.

The protein resides in the cell inner membrane. It catalyses the reaction sn-glycerol 3-phosphate + an acyl-CoA = a 1-acyl-sn-glycero-3-phosphate + CoA. The protein operates within phospholipid metabolism; CDP-diacylglycerol biosynthesis; CDP-diacylglycerol from sn-glycerol 3-phosphate: step 1/3. This Shewanella pealeana (strain ATCC 700345 / ANG-SQ1) protein is Glycerol-3-phosphate acyltransferase.